The chain runs to 155 residues: Interleukin-2 (155 aa).

The N-terminal stretch at methionine 1–serine 20 is a signal peptide. O-linked (GalNAc...) threonine glycosylation occurs at threonine 24. Residues cysteine 79 and cysteine 127 are joined by a disulfide bond. N-linked (GlcNAc...) asparagine glycosylation is present at asparagine 112.

It belongs to the IL-2 family.

It is found in the secreted. Functionally, cytokine produced by activated CD4-positive helper T-cells and to a lesser extend activated CD8-positive T-cells and natural killer (NK) cells that plays pivotal roles in the immune response and tolerance. Binds to a receptor complex composed of either the high-affinity trimeric IL-2R (IL2RA/CD25, IL2RB/CD122 and IL2RG/CD132) or the low-affinity dimeric IL-2R (IL2RB and IL2RG). Interaction with the receptor leads to oligomerization and conformation changes in the IL-2R subunits resulting in downstream signaling starting with phosphorylation of JAK1 and JAK3. In turn, JAK1 and JAK3 phosphorylate the receptor to form a docking site leading to the phosphorylation of several substrates including STAT5. This process leads to activation of several pathways including STAT, phosphoinositide-3-kinase/PI3K and mitogen-activated protein kinase/MAPK pathways. Functions as a T-cell growth factor and can increase NK-cell cytolytic activity as well. Promotes strong proliferation of activated B-cells and subsequently immunoglobulin production. Plays a pivotal role in regulating the adaptive immune system by controlling the survival and proliferation of regulatory T-cells, which are required for the maintenance of immune tolerance. Moreover, participates in the differentiation and homeostasis of effector T-cell subsets, including Th1, Th2, Th17 as well as memory CD8-positive T-cells. This Canis lupus familiaris (Dog) protein is Interleukin-2 (IL2).